A 365-amino-acid polypeptide reads, in one-letter code: Aminomethyltransferase (365 aa).

The protein belongs to the GcvT family. In terms of assembly, the glycine cleavage system is composed of four proteins: P, T, L and H.

The enzyme catalyses N(6)-[(R)-S(8)-aminomethyldihydrolipoyl]-L-lysyl-[protein] + (6S)-5,6,7,8-tetrahydrofolate = N(6)-[(R)-dihydrolipoyl]-L-lysyl-[protein] + (6R)-5,10-methylene-5,6,7,8-tetrahydrofolate + NH4(+). The glycine cleavage system catalyzes the degradation of glycine. In Yersinia pseudotuberculosis serotype O:3 (strain YPIII), this protein is Aminomethyltransferase.